The sequence spans 640 residues: G protein-coupled receptor kinase 1 (640 aa).

The N-terminal stretch occupies residues 1–201 (MEIENIVANT…LEKRPVDKHT (201 aa)). An RGS domain is found at 52–187 (YAFVVEKQPI…IQTMYFHRFL (136 aa)). Residues 202–469 (FRLYRVLGKG…AEEIRAHPFF (268 aa)) enclose the Protein kinase domain. Residues 208 to 216 (LGKGGFGEV) and K231 contribute to the ATP site. The active-site Proton acceptor is the D327. An AGC-kinase C-terminal domain is found at 479–544 (EPVPWKKMEA…GCVSIPWQSE (66 aa)). A disordered region spans residues 610-640 (GVDQQQPSTSAKPAAVRSSRAASASGRTSMI). Residues 619 to 640 (SAKPAAVRSSRAASASGRTSMI) show a composition bias toward low complexity.

Belongs to the protein kinase superfamily. AGC Ser/Thr protein kinase family. GPRK subfamily.

It catalyses the reaction [G-protein-coupled receptor] + ATP = [G-protein-coupled receptor]-phosphate + ADP + H(+). Functionally, specifically phosphorylates the activated forms of G protein-coupled receptors. The chain is G protein-coupled receptor kinase 1 (grk-1) from Caenorhabditis briggsae.